The sequence spans 363 residues: 3-methyl-D-ornithine--L-lysine ligase (363 aa).

Lysine 10 lines the ATP pocket. Position 11-12 (11-12 (LQ)) interacts with L-lysine. ATP-binding positions include aspartate 31, 49-50 (DV), and 72-73 (EN). L-lysine is bound at residue glutamate 72. An ATP-grasp domain is found at 85–269 (EEFSCPVLFD…LIELLFRAFG (185 aa)). ADP-binding positions include lysine 104, lysine 131, serine 138, and 160–163 (EEYV). Residues 169–171 (SLE) and aspartate 225 each bind D-ornithine. The Mg(2+) site is built by glutamate 227, glutamate 239, and aspartate 241. Residue glutamate 239 coordinates ADP. D-ornithine contacts are provided by residues 243 to 248 (RFPSQT) and glutamate 302. 2 residues coordinate L-lysine: serine 246 and glutamate 302.

The protein belongs to the PylC family. It depends on Mg(2+) as a cofactor.

The catalysed reaction is (3R)-3-methyl-D-ornithine + L-lysine + ATP = (3R)-3-methyl-D-ornithyl-N(6)-L-lysine + ADP + phosphate + H(+). Its pathway is amino-acid biosynthesis; L-pyrrolysine biosynthesis. Its function is as follows. Is required for the biosynthesis of pyrrolysine. Catalyzes the ATP-dependent ligation between (3R)-3-methyl-D-ornithine and L-lysine, leading to (3R)-3-methyl-D-ornithyl-N6-L-lysine. In Methanosarcina acetivorans (strain ATCC 35395 / DSM 2834 / JCM 12185 / C2A), this protein is 3-methyl-D-ornithine--L-lysine ligase.